We begin with the raw amino-acid sequence, 306 residues long: Phenylcoumaran benzylic ether reductase IRL1 (306 aa).

Residues 10 to 16 (GATGYIG), Arg35, and Lys44 contribute to the NADP(+) site. Lys132 serves as the catalytic Proton acceptor. Arg136 serves as a coordination point for NADP(+).

This sequence belongs to the NmrA-type oxidoreductase family. Isoflavone reductase subfamily. In terms of tissue distribution, highly expressed in sclerotesta. Expressed in roots, and two-to-four year stems.

The catalysed reaction is (-)-dehydrodiconiferyl alcohol + NADPH + H(+) = (S)-isodihydrodehydrodiconiferyl alcohol + NADP(+). The enzyme catalyses (+)-dehydrodiconiferyl alcohol + NADPH + H(+) = (R)-isodihydrodehydrodiconiferyl alcohol + NADP(+). It catalyses the reaction (2R,3S)-dihydrodehydrodiconiferyl alcohol + NADPH + H(+) = (S)-tetrahydrodehydrodiconiferyl alcohol + NADP(+). It carries out the reaction (2S,3R)-dihydrodehydrodiconiferyl alcohol + NADPH + H(+) = (R)-tetrahydrodehydrodiconiferyl alcohol + NADP(+). Its function is as follows. Oxidoreductase involved in lignan biosynthesis. Catalyzes the NADPH-dependent reduction of phenylcoumaran benzylic ethers. Converts dehydrodiconiferyl alcohol (DDC) to isodihydrodehydrodiconiferyl alcohol (IDDDC), and dihydrodehydrodiconiferyl alcohol (DDDC) to tetrahydrodehydrodiconiferyl alcohol (TDDC). May regulate changes in lignin content and accumulation of flavonoids. The polypeptide is Phenylcoumaran benzylic ether reductase IRL1 (Ginkgo biloba (Ginkgo)).